Consider the following 885-residue polypeptide: DNA mismatch repair protein MutS (885 aa).

626 to 633 (GPNMGGKS) serves as a coordination point for ATP.

It belongs to the DNA mismatch repair MutS family.

In terms of biological role, this protein is involved in the repair of mismatches in DNA. It is possible that it carries out the mismatch recognition step. This protein has a weak ATPase activity. The polypeptide is DNA mismatch repair protein MutS (Burkholderia lata (strain ATCC 17760 / DSM 23089 / LMG 22485 / NCIMB 9086 / R18194 / 383)).